We begin with the raw amino-acid sequence, 120 residues long: Mating factor alpha-2 (120 aa).

The N-terminal stretch at 1–21 is a signal peptide; that stretch reads MKFISTFLTFILAAVSVTASS. 2 propeptides span residues 22 to 86 and 102 to 107; these read DEDI…VADA and EANADA.

In terms of biological role, the active factor is excreted into the culture medium by haploid cells of the alpha mating type and acts on cells of the opposite mating type (type A). It mediates the conjugation process between the two types by inhibiting the initiation of DNA synthesis in type a cells and synchronizing them with type alpha. The sequence is that of Mating factor alpha-2 (MF(ALPHA)2) from Saccharomyces cerevisiae (strain ATCC 204508 / S288c) (Baker's yeast).